A 332-amino-acid chain; its full sequence is Thiamine thiazole synthase (332 aa).

Substrate is bound by residues Cys87, Glu108–Ala109, Gly116, and Val184. Cys221 is subject to 2,3-didehydroalanine (Cys). Substrate is bound by residues Asp223, His238, Met290, and Arg300–Gly302.

The protein belongs to the THI4 family. As to quaternary structure, homooctamer. It depends on Fe cation as a cofactor. Post-translationally, during the catalytic reaction, a sulfide is transferred from Cys-221 to a reaction intermediate, generating a dehydroalanine residue.

It is found in the cytoplasm. The protein localises to the nucleus. It catalyses the reaction [ADP-thiazole synthase]-L-cysteine + glycine + NAD(+) = [ADP-thiazole synthase]-dehydroalanine + ADP-5-ethyl-4-methylthiazole-2-carboxylate + nicotinamide + 3 H2O + 2 H(+). In terms of biological role, involved in biosynthesis of the thiamine precursor thiazole. Catalyzes the conversion of NAD and glycine to adenosine diphosphate 5-(2-hydroxyethyl)-4-methylthiazole-2-carboxylic acid (ADT), an adenylated thiazole intermediate. The reaction includes an iron-dependent sulfide transfer from a conserved cysteine residue of the protein to a thiazole intermediate. The enzyme can only undergo a single turnover, which suggests it is a suicide enzyme. May have additional roles in adaptation to various stress conditions and in DNA damage tolerance. The chain is Thiamine thiazole synthase from Aspergillus fumigatus (strain ATCC MYA-4609 / CBS 101355 / FGSC A1100 / Af293) (Neosartorya fumigata).